Reading from the N-terminus, the 259-residue chain is ATP synthase subunit b 2 (259 aa).

A helical membrane pass occupies residues 5–27 (WFTVSAQAINFLILVALLKRFLY).

Belongs to the ATPase B chain family. F-type ATPases have 2 components, F(1) - the catalytic core - and F(0) - the membrane proton channel. F(1) has five subunits: alpha(3), beta(3), gamma(1), delta(1), epsilon(1). F(0) has three main subunits: a(1), b(2) and c(10-14). The alpha and beta chains form an alternating ring which encloses part of the gamma chain. F(1) is attached to F(0) by a central stalk formed by the gamma and epsilon chains, while a peripheral stalk is formed by the delta and b chains.

The protein localises to the cell inner membrane. F(1)F(0) ATP synthase produces ATP from ADP in the presence of a proton or sodium gradient. F-type ATPases consist of two structural domains, F(1) containing the extramembraneous catalytic core and F(0) containing the membrane proton channel, linked together by a central stalk and a peripheral stalk. During catalysis, ATP synthesis in the catalytic domain of F(1) is coupled via a rotary mechanism of the central stalk subunits to proton translocation. Its function is as follows. Component of the F(0) channel, it forms part of the peripheral stalk, linking F(1) to F(0). This Syntrophotalea carbinolica (strain DSM 2380 / NBRC 103641 / GraBd1) (Pelobacter carbinolicus) protein is ATP synthase subunit b 2.